A 539-amino-acid polypeptide reads, in one-letter code: Capsid protein VP1 (539 aa).

The interval 1–221 (MKMASNDANP…FIFLVPPTVE (221 aa)) is shell domain. The tract at residues 222 to 274 (SRTKPFTVPVLTVEEMSNSRFPIPLEKLYTGPSSAFVVQPQNGRCTTDGVLLG) is P1 sub-domain 1. The interval 222–539 (SRTKPFTVPV…GNGTGRRRAL (318 aa)) is protruding domain. Residues 275-417 (TTQLSAVNIC…SGRTGHNVHL (143 aa)) are P2 sub-domain. A P1 sub-domain 2 region spans residues 418–539 (APAVAPTFPG…GNGTGRRRAL (122 aa)).

This sequence belongs to the caliciviridae capsid protein family. Homodimer. Homomultimer. Interacts with the minor capsid protein VP2. Interacts (via C-terminus) with host type I histo-blood group structures antigens at the surface of target cells. Post-translationally, may be cleaved by host protease to generate soluble capsid protein. Assembled capsid cannot be cleaved.

Its subcellular location is the virion. The protein localises to the host cytoplasm. Its function is as follows. Capsid protein self assembles to form an icosahedral capsid with a T=3 symmetry, about 38 nm in diameter, and consisting of 180 capsid proteins. A smaller form of capsid with a diameter of 23 nm might be capsid proteins assembled as icosahedron with T=1 symmetry. The capsid encapsulates the genomic RNA and is decorated with VP2 proteins. Attaches virion to target cells by binding histo-blood group antigens (HBGAs) present on gastroduodenal epithelial cells. In terms of biological role, the soluble capsid protein may play a role in viral immunoevasion. The chain is Capsid protein VP1 from Homo sapiens (Human).